The chain runs to 405 residues: Deoxyguanosinetriphosphate triphosphohydrolase-like protein (405 aa).

The HD domain maps to 75–219 (RLTHTIEVAQ…AAIADDIAYN (145 aa)).

The protein belongs to the dGTPase family. Type 2 subfamily.

The chain is Deoxyguanosinetriphosphate triphosphohydrolase-like protein from Rhizobium etli (strain ATCC 51251 / DSM 11541 / JCM 21823 / NBRC 15573 / CFN 42).